A 324-amino-acid polypeptide reads, in one-letter code: Short chain dehydrogenase/reductase dmxR8 (324 aa).

Residues leucine 33, lysine 58, aspartate 83, and asparagine 110 each contribute to the NADP(+) site. Serine 163 acts as the Proton donor in catalysis. NADP(+) is bound by residues tyrosine 200 and lysine 204. The Proton acceptor role is filled by tyrosine 200. Lysine 204 functions as the Lowers pKa of active site Tyr in the catalytic mechanism.

It belongs to the short-chain dehydrogenases/reductases (SDR) family.

It functions in the pathway secondary metabolite biosynthesis. Its function is as follows. Short chain dehydrogenase; part of the gene cluster that mediates the biosynthesis of the dimeric xanthones cryptosporioptides. The pathway begins with the synthesis of atrochrysone thioester by the polyketide synthase dmx-nrPKS. The atrochrysone carboxyl ACP thioesterase dmxR1 then breaks the thioester bond and releases the atrochrysone carboxylic acid from dmx-nrPKS. Atrochrysone carboxylic acid is decarboxylated by the decarboxylase dmxR15, and oxidized by the anthrone oxygenase dmxR16 to yield emodin. Emodin is then reduced to emodin hydroquinone by the oxidoreductase dmxR7. A-ring reduction by the short chain dehydrogenase dmxR18, dehydration by the scytalone dehydratase-like protein dmxR17 and probable spontaneous re-oxidation, results in overall deoxygenation to chrysophanol. Baeyer-Villiger oxidation by the Baeyer-Villiger monooxygenase (BVMO) dmxR6 then yields monodictylactone in equilibrium with monodictyphenone. In the case of the cryptosporioptides biosynthesis, monodictylactone is reduced at C-12 to an alcohol (by the short chain dehydrogenases dmxR12 or dmxR8) and hydroxylated at C-5 by dmxR9, yielding the electron-rich aromatic which could eliminate H(2)O to form the ortho-quinonemethide, followed by tautomerisation to paraquinone and complete the formal reduction to produce the 10-methylgroup. Conjugate addition of C-4a-OH to the resulting paraquinone by the monooxygenase dmxR10 then gives cyclohexadienone, which is then reduced at C-5 by the short chain dehydrogenase dmxR3 to give the dihydroxanthone. The 6,7-epoxide in the cryptosporioptides could be introduced by the cytochrome P450 monooxygenase dmxL3. The highly reducing PKS dmxL2 manufactures butyrate, which is further carboxylated by dmxL1 to form ethylmalonate. It is not yet clear whether the carboxylation occurs while the butyrate is attached to the ACP of dmxL2, but this unusual fungal metabolite could then be esterified to O-5 by the O-acetyltransferase dmxR13. Finally, dimerization performed by dmxR5 gives the observed dimers cryptosporioptides A, B and C as the final products of the pathway. The protein is Short chain dehydrogenase/reductase dmxR8 of Cryptosporiopsis sp. (strain 8999).